A 425-amino-acid polypeptide reads, in one-letter code: Riboflavin biosynthesis protein RibBA (425 aa).

The tract at residues 1–204 is DHBP synthase; the sequence is MTRLDSVERA…IADLIEWRRK (204 aa). D-ribulose 5-phosphate is bound by residues 28-29, aspartate 33, 141-145, and glutamate 165; these read RE and RPGHT. Glutamate 29 is a binding site for Mg(2+). Residue histidine 144 participates in Mg(2+) binding. The segment at 205-425 is GTP cyclohydrolase II; sequence HEKHIERVAE…HLPGEFGGAL (221 aa). 259–263 contacts GTP; that stretch reads RVHSE. Residues cysteine 264, cysteine 275, and cysteine 277 each coordinate Zn(2+). Residues glutamine 280, 303–305, and threonine 325 each bind GTP; that span reads EGR. Aspartate 337 (proton acceptor; for GTP cyclohydrolase activity) is an active-site residue. The Nucleophile; for GTP cyclohydrolase activity role is filled by arginine 339. Threonine 360 and lysine 365 together coordinate GTP.

It in the N-terminal section; belongs to the DHBP synthase family. This sequence in the C-terminal section; belongs to the GTP cyclohydrolase II family. Mg(2+) is required as a cofactor. Requires Mn(2+) as cofactor. It depends on Zn(2+) as a cofactor.

It carries out the reaction D-ribulose 5-phosphate = (2S)-2-hydroxy-3-oxobutyl phosphate + formate + H(+). The enzyme catalyses GTP + 4 H2O = 2,5-diamino-6-hydroxy-4-(5-phosphoribosylamino)-pyrimidine + formate + 2 phosphate + 3 H(+). Its pathway is cofactor biosynthesis; riboflavin biosynthesis; 2-hydroxy-3-oxobutyl phosphate from D-ribulose 5-phosphate: step 1/1. It functions in the pathway cofactor biosynthesis; riboflavin biosynthesis; 5-amino-6-(D-ribitylamino)uracil from GTP: step 1/4. Functionally, catalyzes the conversion of D-ribulose 5-phosphate to formate and 3,4-dihydroxy-2-butanone 4-phosphate. In terms of biological role, catalyzes the conversion of GTP to 2,5-diamino-6-ribosylamino-4(3H)-pyrimidinone 5'-phosphate (DARP), formate and pyrophosphate. This Mycobacterium bovis (strain ATCC BAA-935 / AF2122/97) protein is Riboflavin biosynthesis protein RibBA.